The chain runs to 610 residues: Propanediol dehydratase-reactivating factor large subunit (610 aa).

ATP is bound at residue 11 to 13 (NSS). Positions 105, 166, and 183 each coordinate Mg(2+). Residues 459 to 462 (EEIK), 557 to 558 (GS), and Arg591 each bind ATP.

It belongs to the DdrA/PduG family. Forms a heterotetramer PduG(2)/PduH(2). It depends on Mg(2+) as a cofactor.

The protein localises to the bacterial microcompartment. The catalysed reaction is ATP + H2O = ADP + phosphate + H(+). It functions in the pathway polyol metabolism; 1,2-propanediol degradation. In terms of biological role, large subunit of the propanediol dehydratase-reactivating factor (DDR), which reactivates suicidally inhibited adenosylcobalamin-dependent propanediol dehydratase (diol dehydratase, DDH) found in the bacterial microcompartment (BMC) dedicated to 1,2-propanediol (1,2-PD) degradation. Reactivates inactivated DDH in the presence of ATP, Mg(2+) and free adenosylcobalamin (AdoCbl), by mediating the exchange of the tightly bound damaged cofactor AdoCbl for a free intact one. This subunit contains the adenosine nucleotide binding site. Its function is as follows. The 1,2-PD-specific bacterial microcompartment (BMC) concentrates low levels of 1,2-PD catabolic enzymes, concentrates volatile reaction intermediates thus enhancing pathway flux and keeps the level of toxic, mutagenic propionaldehyde low. The chain is Propanediol dehydratase-reactivating factor large subunit from Salmonella typhimurium (strain LT2 / SGSC1412 / ATCC 700720).